The sequence spans 260 residues: Adenosylcobinamide-GDP ribazoletransferase (260 aa).

8 helical membrane passes run Ala-3–Trp-23, Phe-36–Ile-56, Trp-60–Leu-80, Val-108–Leu-128, Leu-133–Met-153, Ala-180–Val-200, Met-206–Leu-226, and Gly-239–Ala-259.

It belongs to the CobS family. Mg(2+) is required as a cofactor.

It is found in the cell inner membrane. The enzyme catalyses alpha-ribazole + adenosylcob(III)inamide-GDP = adenosylcob(III)alamin + GMP + H(+). It catalyses the reaction alpha-ribazole 5'-phosphate + adenosylcob(III)inamide-GDP = adenosylcob(III)alamin 5'-phosphate + GMP + H(+). It participates in cofactor biosynthesis; adenosylcobalamin biosynthesis; adenosylcobalamin from cob(II)yrinate a,c-diamide: step 7/7. Functionally, joins adenosylcobinamide-GDP and alpha-ribazole to generate adenosylcobalamin (Ado-cobalamin). Also synthesizes adenosylcobalamin 5'-phosphate from adenosylcobinamide-GDP and alpha-ribazole 5'-phosphate. The polypeptide is Adenosylcobinamide-GDP ribazoletransferase (Prochlorococcus marinus (strain MIT 9313)).